The sequence spans 226 residues: UPF0758 protein M28_Spy0816 (226 aa).

Residues 103–225 (SVLTSVQVAE…YYSFREKSTL (123 aa)) enclose the MPN domain. Zn(2+) is bound by residues His174, His176, and Asp187. The JAMM motif signature appears at 174-187 (HNHPSGNIEPSSND).

It belongs to the UPF0758 family.

This chain is UPF0758 protein M28_Spy0816, found in Streptococcus pyogenes serotype M28 (strain MGAS6180).